We begin with the raw amino-acid sequence, 299 residues long: Ribonuclease H2 subunit A (299 aa).

N-acetylmethionine is present on Met-1. The RNase H type-2 domain occupies 28–250; sequence PCVLGVDEAG…AQTILEKEAE (223 aa). Residues Asp-34, Glu-35, and Asp-141 each contribute to the a divalent metal cation site. Phosphothreonine occurs at positions 204 and 216. Phosphoserine is present on residues Ser-257 and Ser-277.

This sequence belongs to the RNase HII family. Eukaryotic subfamily. The RNase H2 complex is a heterotrimer composed of the catalytic subunit RNASEH2A and the non-catalytic subunits RNASEH2B and RNASEH2C. Mn(2+) is required as a cofactor. Requires Mg(2+) as cofactor.

It is found in the nucleus. It carries out the reaction Endonucleolytic cleavage to 5'-phosphomonoester.. In terms of biological role, catalytic subunit of RNase HII, an endonuclease that specifically degrades the RNA of RNA:DNA hybrids. Participates in DNA replication, possibly by mediating the removal of lagging-strand Okazaki fragment RNA primers during DNA replication. Mediates the excision of single ribonucleotides from DNA:RNA duplexes. This is Ribonuclease H2 subunit A (RNASEH2A) from Homo sapiens (Human).